The primary structure comprises 419 residues: GTPase Obg (419 aa).

One can recognise an Obg domain in the interval 1–158; it reads MIFIDTAEII…RRLRLELKLV (158 aa). Residues 159-328 enclose the OBG-type G domain; sequence AHVGLVGLPN…LVDVLFELIS (170 aa). GTP contacts are provided by residues 165–172, 190–194, 211–214, 281–284, and 309–311; these read GLPNAGKS, FTTRS, DVPG, NKID, and SAA. Residues S172 and T192 each coordinate Mg(2+). An OCT domain is found at 344-419; sequence ELPPLPEDFS…VIHDKAFEIL (76 aa).

This sequence belongs to the TRAFAC class OBG-HflX-like GTPase superfamily. OBG GTPase family. In terms of assembly, monomer. Mg(2+) is required as a cofactor.

It is found in the cytoplasm. An essential GTPase which binds GTP, GDP and possibly (p)ppGpp with moderate affinity, with high nucleotide exchange rates and a fairly low GTP hydrolysis rate. Plays a role in control of the cell cycle, stress response, ribosome biogenesis and in those bacteria that undergo differentiation, in morphogenesis control. The sequence is that of GTPase Obg from Coprothermobacter proteolyticus (strain ATCC 35245 / DSM 5265 / OCM 4 / BT).